The following is a 265-amino-acid chain: Undecaprenyl-diphosphatase 1 (265 aa).

7 helical membrane passes run 4–24, 42–62, 84–104, 108–128, 184–204, 217–237, and 245–265; these read IIIA…PISS, AKTF…ILYH, FHVF…HDVI, LFQP…MIFA, SEFS…LDLL, MFAV…VTFL, and LKPF…FVLL.

The protein belongs to the UppP family.

The protein resides in the cell membrane. It catalyses the reaction di-trans,octa-cis-undecaprenyl diphosphate + H2O = di-trans,octa-cis-undecaprenyl phosphate + phosphate + H(+). In terms of biological role, catalyzes the dephosphorylation of undecaprenyl diphosphate (UPP). Confers resistance to bacitracin. This Bacillus thuringiensis (strain Al Hakam) protein is Undecaprenyl-diphosphatase 1.